A 176-amino-acid polypeptide reads, in one-letter code: Cytochrome b (176 aa).

3 consecutive transmembrane segments (helical) span residues F33 to M53, W77 to I98, and W113 to L133. 2 residues coordinate heme b: H83 and H97.

It belongs to the cytochrome b family. In terms of assembly, the cytochrome bc1 complex contains 11 subunits: 3 respiratory subunits (MT-CYB, CYC1 and UQCRFS1), 2 core proteins (UQCRC1 and UQCRC2) and 6 low-molecular weight proteins (UQCRH/QCR6, UQCRB/QCR7, UQCRQ/QCR8, UQCR10/QCR9, UQCR11/QCR10 and a cleavage product of UQCRFS1). This cytochrome bc1 complex then forms a dimer. Requires heme b as cofactor.

Its subcellular location is the mitochondrion inner membrane. In terms of biological role, component of the ubiquinol-cytochrome c reductase complex (complex III or cytochrome b-c1 complex) that is part of the mitochondrial respiratory chain. The b-c1 complex mediates electron transfer from ubiquinol to cytochrome c. Contributes to the generation of a proton gradient across the mitochondrial membrane that is then used for ATP synthesis. The sequence is that of Cytochrome b (MT-CYB) from Promops centralis (Big crested mastiff bat).